Here is a 403-residue protein sequence, read N- to C-terminus: MAQNDKIAPQDQDSFLDDQPGVRPIPSFDDMPLHQNLLRGIYSYGFEKPSSIQQRAIAPFTRGGDIIAQAQSGTGKTGAFSIGLLQRLDFRHNLIQGLVLSPTRELALQTAEVISRIGEFLSNSSKFCETFVGGTRVQDDLRKLQAGVIVAVGTPGRVSDVIKRGALRTESLRVLVLDEADEMLSQGFADQIYEIFRFLPKDIQVALFSATMPEEVLELTKKFMRDPVRILVKRESLTLEGIKQFFIAVEEEHKLDTLMDLYETVSIAQSVIFANTRRKVDWIAEKLNQSNHTVSSMHAEMPKSDRERVMNTFRSGSSRVLVTTDLVARGIDVHHVNIVINFDLPTNKENYLHRIGRGGRYGRKGVAINFVTEKDVELLHEIEAHYHTQIDELPVDFAAYLGE.

The interval 1 to 29 is disordered; that stretch reads MAQNDKIAPQDQDSFLDDQPGVRPIPSFD. The short motif at 26–54 is the Q motif element; the sequence is PSFDDMPLHQNLLRGIYSYGFEKPSSIQQ. The 174-residue stretch at 57–230 folds into the Helicase ATP-binding domain; it reads IAPFTRGGDI…KKFMRDPVRI (174 aa). 70–77 provides a ligand contact to ATP; the sequence is AQSGTGKT. A DEAD box motif is present at residues 178–181; the sequence is DEAD. The Helicase C-terminal domain occupies 241 to 401; that stretch reads GIKQFFIAVE…ELPVDFAAYL (161 aa).

The protein belongs to the DEAD box helicase family. eIF4A subfamily. In terms of assembly, eIF4F is a multi-subunit complex, the composition of which varies with external and internal environmental conditions. It is composed of at least EIF4A, EIF4E and EIF4G.

The enzyme catalyses ATP + H2O = ADP + phosphate + H(+). ATP-dependent RNA helicase which is a subunit of the eIF4F complex involved in cap recognition and is required for mRNA binding to ribosome. In the current model of translation initiation, eIF4A unwinds RNA secondary structures in the 5'-UTR of mRNAs which is necessary to allow efficient binding of the small ribosomal subunit, and subsequent scanning for the initiator codon. The chain is Probable eukaryotic initiation factor 4A from Leishmania infantum.